The sequence spans 235 residues: Large ribosomal subunit protein uL1 (235 aa).

It belongs to the universal ribosomal protein uL1 family. Part of the 50S ribosomal subunit.

Functionally, binds directly to 23S rRNA. The L1 stalk is quite mobile in the ribosome, and is involved in E site tRNA release. Its function is as follows. Protein L1 is also a translational repressor protein, it controls the translation of the L11 operon by binding to its mRNA. The sequence is that of Large ribosomal subunit protein uL1 from Mycobacterium tuberculosis (strain ATCC 25177 / H37Ra).